The sequence spans 79 residues: SVVAHMGIVLSGLMTLTMWGISGSYTLMIAHGLCSSGLFCLANISYERMGSRSLLINKGLLNFMPSLSLWWFLLCSSNM.

Helical transmembrane passes span 24 to 44 (SYTL…LANI) and 54 to 74 (LLIN…WFLL).

Belongs to the complex I subunit 4 family.

The protein resides in the mitochondrion membrane. It catalyses the reaction a ubiquinone + NADH + 5 H(+)(in) = a ubiquinol + NAD(+) + 4 H(+)(out). In terms of biological role, core subunit of the mitochondrial membrane respiratory chain NADH dehydrogenase (Complex I) that is believed to belong to the minimal assembly required for catalysis. Complex I functions in the transfer of electrons from NADH to the respiratory chain. The immediate electron acceptor for the enzyme is believed to be ubiquinone. This is NADH-ubiquinone oxidoreductase chain 4 (ND4) from Simulium vittatum (Striped black fly).